A 245-amino-acid polypeptide reads, in one-letter code: Haloacid dehalogenase-like hydrolase domain-containing protein At2g33255 (245 aa).

Thr2 is subject to N-acetylalanine. The Nucleophile role is filled by Asp39. Residues Asp39, Asp41, and Asp186 each coordinate Mg(2+). The active-site Proton donor is Asp41.

This sequence belongs to the HAD-like hydrolase superfamily. DOG/GPP family. Mg(2+) serves as cofactor.

In Arabidopsis thaliana (Mouse-ear cress), this protein is Haloacid dehalogenase-like hydrolase domain-containing protein At2g33255.